The primary structure comprises 156 residues: Anaerobic ribonucleoside-triphosphate reductase-activating protein (156 aa).

3 residues coordinate [4Fe-4S] cluster: Cys-26, Cys-30, and Cys-33. S-adenosyl-L-methionine-binding positions include 32-34 (GCY) and Gly-72.

Belongs to the organic radical-activating enzymes family. As to quaternary structure, forms a tetramer composed of two NrdD and two NrdG subunits. It depends on [4Fe-4S] cluster as a cofactor.

It catalyses the reaction glycyl-[protein] + reduced [flavodoxin] + S-adenosyl-L-methionine = glycin-2-yl radical-[protein] + semiquinone [flavodoxin] + 5'-deoxyadenosine + L-methionine + H(+). Functionally, activation of anaerobic ribonucleoside-triphosphate reductase under anaerobic conditions by generation of an organic free radical, using S-adenosylmethionine and reduced flavodoxin as cosubstrates to produce 5'-deoxy-adenosine. This Escherichia coli (Bacteriophage T4) protein is Anaerobic ribonucleoside-triphosphate reductase-activating protein (NRDG).